A 225-amino-acid chain; its full sequence is ATP-dependent dethiobiotin synthetase BioD 1 (225 aa).

Mg(2+) is bound by residues glutamate 13 and threonine 17. Glutamate 13–valine 18 contributes to the ATP binding site. Lysine 38 is a catalytic residue. Residue serine 42 coordinates substrate. Aspartate 55 and glutamate 116 together coordinate Mg(2+). Residues aspartate 55, glutamate 116–glycine 119, and asparagine 176–aspartate 177 contribute to the ATP site. A substrate-binding site is contributed by tyrosine 188. ATP is bound by residues proline 205–leucine 207 and glutamate 212.

The protein belongs to the dethiobiotin synthetase family. In terms of assembly, homodimer. Requires Mg(2+) as cofactor.

The protein localises to the cytoplasm. It catalyses the reaction (7R,8S)-7,8-diammoniononanoate + CO2 + ATP = (4R,5S)-dethiobiotin + ADP + phosphate + 3 H(+). It participates in cofactor biosynthesis; biotin biosynthesis; biotin from 7,8-diaminononanoate: step 1/2. Its function is as follows. Catalyzes a mechanistically unusual reaction, the ATP-dependent insertion of CO2 between the N7 and N8 nitrogen atoms of 7,8-diaminopelargonic acid (DAPA, also called 7,8-diammoniononanoate) to form a ureido ring. Only CTP can partially replace ATP while diaminobiotin is only 37% as effective as 7,8-diaminopelargonic acid. In another study both CTP and GTP (but not ITP, TTP or UTP) can partially replace ATP. The chain is ATP-dependent dethiobiotin synthetase BioD 1 from Escherichia coli (strain K12).